The sequence spans 363 residues: Dioxygenase sphC (363 aa).

Fe cation contacts are provided by His-183, Asp-185, and His-259.

This sequence belongs to the PhyH family. In terms of assembly, homodimer. The cofactor is Fe cation.

The catalysed reaction is sphingofungin B1 + 2-oxoglutarate + O2 = sphingofungin B + succinate + CO2. Its pathway is secondary metabolite biosynthesis. Functionally, dioxygenase; part of the gene cluster that mediates the biosynthesis of sphingofungins, bioactive molecules acting as sphingolipid inhibitors via inhibiting serine palmitoyl transferase (SPT). Within the pathway, sphC catalyzes the hydrolxylation at C-4 to convert sphingofungin B1 into sphingofungin B as well as presphingofungin into sphingofungin B2. Sphingofungin biosynthesis starts with the PKS sphB that produces an C18 polyketide precursor 3-hydroxyoctadeca-4,10-dienoyl-ACP containing one delta-6 desaturation and one delta-12 desaturation. The aminoacyl transferase sphA uses the sphB product to produce 3-keto-presphingofungin by adding an aminomalonate molecule. SphF then reduces the C-3 ketone of 3-keto-presphingofungin which leads to presphingofungin. The cytochrome P450 monooxygenase sphH converts presphingofungin into sphingofungin B1 which is further converted to sphingofungin B by the dioxygenase sphC. SphC is also able to convert presphingofungin into sphingofungin B2. The acetyltransferase sphE acetylates sphingofungin B to produce sphingofungin C, but can also convert sphingofungin B1 into sphingofungin C1 and sphingofungin B2 into sphingofungin C2. Finally, sphingofungin C can be spontaneously converted into sphingofungin D. The polypeptide is Dioxygenase sphC (Aspergillus fumigatus (strain CBS 144.89 / FGSC A1163 / CEA10) (Neosartorya fumigata)).